Consider the following 292-residue polypeptide: Chronophin (292 aa).

Aspartate 25 acts as the Nucleophile in catalysis. Positions 25 and 27 each coordinate Mg(2+). Aspartate 27 (proton donor) is an active-site residue. Substrate contacts are provided by residues 58-60 (SNN), histidine 178, and lysine 209. Aspartate 234 serves as a coordination point for Mg(2+).

It belongs to the HAD-like hydrolase superfamily. Homodimer. Requires Mg(2+) as cofactor. In terms of tissue distribution, ubiquitous. highly expressed in brain (at protein level).

The protein resides in the cytoplasm. It is found in the cytosol. It localises to the cytoskeleton. Its subcellular location is the cell projection. The protein localises to the ruffle membrane. The protein resides in the lamellipodium membrane. It is found in the cell membrane. The catalysed reaction is pyridoxal 5'-phosphate + H2O = pyridoxal + phosphate. The enzyme catalyses pyridoxine 5'-phosphate + H2O = pyridoxine + phosphate. It catalyses the reaction pyridoxamine + phosphate = pyridoxamine 5'-phosphate + H2O. It carries out the reaction O-phospho-L-seryl-[protein] + H2O = L-seryl-[protein] + phosphate. Its activity is regulated as follows. Inhibited by beryllium trifluoride. Functions as a pyridoxal phosphate (PLP) phosphatase, which also catalyzes the dephosphorylation of pyridoxine 5'-phosphate (PNP) and pyridoxamine 5'-phosphate (PMP), with order of substrate preference PLP &gt; PNP &gt; PMP and therefore plays a role in vitamin B6 metabolism. Also functions as a protein serine phosphatase that specifically dephosphorylates 'Ser-3' in proteins of the actin-depolymerizing factor (ADF)/cofilin family like CFL1 and DSTN. Thereby, regulates cofilin-dependent actin cytoskeleton reorganization, being required for normal progress through mitosis and normal cytokinesis. Does not dephosphorylate phosphothreonines in LIMK1. Does not dephosphorylate peptides containing phosphotyrosine. The protein is Chronophin of Mus musculus (Mouse).